A 630-amino-acid polypeptide reads, in one-letter code: Protein phosphatase 2C-like domain-containing protein 1 (630 aa).

The region spanning 170-621 (GVGICEDRNS…DNITVMVIFL (452 aa)) is the PPM-type phosphatase domain. Residues 557–569 (TTHRKPCSEKVTD) show a composition bias toward basic and acidic residues. The segment at 557-578 (TTHRKPCSEKVTDRPTSVNDVA) is disordered.

This sequence belongs to the PP2C family.

In Homo sapiens (Human), this protein is Protein phosphatase 2C-like domain-containing protein 1 (PP2D1).